A 410-amino-acid chain; its full sequence is Adenosine receptor A2a (410 aa).

Residues 1–4 (MGSS) lie on the Extracellular side of the membrane. The chain crosses the membrane as a helical span at residues 5 to 29 (VYITVELAIAVLAILGNVLVCWAVW). Residues 30-39 (INSNLQNVTN) are Cytoplasmic-facing. Residues 40–63 (FFVVSLAAADIAVGVLAIPFAITI) form a helical membrane-spanning segment. The Extracellular portion of the chain corresponds to 64–74 (STGFCAACHGC). 3 cysteine pairs are disulfide-bonded: C68-C154, C71-C143, and C74-C161. A helical transmembrane segment spans residues 75–97 (LFFACFVLVLTQSSIFSLLAIAI). Topologically, residues 98 to 117 (DRYIAIRIPLRYNGLVTGVR) are cytoplasmic. Residues 118 to 140 (AKGIIAICWVLSFAIGLTPMLGW) form a helical membrane-spanning segment. Residues 141 to 168 (NNCSQKDGNSTKTCGEGRVTCLFEDVVP) lie on the Extracellular side of the membrane. N-linked (GlcNAc...) asparagine glycosylation is found at N142 and N149. Position 164 (E164) interacts with adenosine. The helical transmembrane segment at 169-193 (MNYMVYYNFFAFVLLPLLLMLAIYL) threads the bilayer. Topologically, residues 194–229 (RIFLAARRQLKQMESQPLPGERTRSTLQKEVHAAKS) are cytoplasmic. A helical transmembrane segment spans residues 230–253 (LAIIVGLFALCWLPLHIINCFTFF). Adenosine is bound at residue N248. C254 and C257 are oxidised to a cystine. The Extracellular segment spans residues 254–261 (CSTCRHAP). A helical transmembrane segment spans residues 262–285 (PWLMYLAIILSHSNSVVNPFIYAY). S272 and H273 together coordinate adenosine. The Cytoplasmic segment spans residues 286-410 (RIREFRQTFR…SSWSSEFAPS (125 aa)). The interval 322 to 410 (HSTEGEQVSL…SSWSSEFAPS (89 aa)) is interaction with GAS2L2. The interval 344-410 (GSATHSGRRP…SSWSSEFAPS (67 aa)) is disordered. Residues 371–388 (RDVELPTQERQEGQEHPG) are compositionally biased toward basic and acidic residues. Polar residues predominate over residues 401–410 (SSWSSEFAPS).

This sequence belongs to the G-protein coupled receptor 1 family. Interacts (via cytoplasmic C-terminal domain) with USP4; the interaction is direct. May interact with DRD4. Interacts with NECAB2. Interacts (via cytoplasmic C-terminal domain) with GAS2L2; interaction enhances receptor-mediated adenylyl cyclase activity. Ubiquitinated. Deubiquitinated by USP4; leading to stabilization and expression at the cell surface. As to expression, expressed in striatal neurons (at protein level).

It localises to the cell membrane. In terms of biological role, receptor for adenosine. The activity of this receptor is mediated by G proteins which activate adenylyl cyclase. The polypeptide is Adenosine receptor A2a (Adora2a) (Rattus norvegicus (Rat)).